The sequence spans 141 residues: Protein C19orf12 homolog (141 aa).

A helical membrane pass occupies residues 33–53 (LVAAAGAFLGGLVGGPPGIAV).

The protein belongs to the C19orf12 family.

It localises to the mitochondrion. Its subcellular location is the mitochondrion membrane. The protein localises to the endoplasmic reticulum. The protein resides in the cytoplasm. It is found in the cytosol. The chain is Protein C19orf12 homolog from Xenopus tropicalis (Western clawed frog).